We begin with the raw amino-acid sequence, 62 residues long: Large ribosomal subunit protein uL29 (62 aa).

Belongs to the universal ribosomal protein uL29 family.

The sequence is that of Large ribosomal subunit protein uL29 from Oleidesulfovibrio alaskensis (strain ATCC BAA-1058 / DSM 17464 / G20) (Desulfovibrio alaskensis).